Consider the following 510-residue polypeptide: Flavonoid 3',5'-hydroxylase (510 aa).

Residue C447 coordinates heme.

This sequence belongs to the cytochrome P450 family. Heme serves as cofactor.

The catalysed reaction is a 3',5'-unsubstituted flavanone + 2 reduced [NADPH--hemoprotein reductase] + 2 O2 = a 3',5'-dihydroxyflavanone + 2 oxidized [NADPH--hemoprotein reductase] + 2 H2O + 2 H(+). It functions in the pathway pigment biosynthesis; anthocyanin biosynthesis. Its function is as follows. Catalyzes the 3'5'-hydroxylation of naringenin and eriodictyol to form 5,7,3,'4',5'-pentahydroxyflavanone and 3',5'-hydroxylation of dihydrokaempferol and dihydroquercetin to form dihydromyricetin. The protein is Flavonoid 3',5'-hydroxylase (CYP75A7) of Eustoma exaltatum subsp. russellianum (Bluebells).